The sequence spans 816 residues: Leucine--tRNA ligase (816 aa).

A 'HIGH' region motif is present at residues 40 to 51; sequence SYPSGSQLHAGH. The 'KMSKS' region motif lies at 576 to 580; that stretch reads KMSKS. Lysine 579 is a binding site for ATP.

It belongs to the class-I aminoacyl-tRNA synthetase family.

It localises to the cytoplasm. The catalysed reaction is tRNA(Leu) + L-leucine + ATP = L-leucyl-tRNA(Leu) + AMP + diphosphate. This chain is Leucine--tRNA ligase, found in Clostridium perfringens (strain ATCC 13124 / DSM 756 / JCM 1290 / NCIMB 6125 / NCTC 8237 / Type A).